The primary structure comprises 202 residues: dTTP/UTP pyrophosphatase (202 aa).

The active-site Proton acceptor is the aspartate 80.

It belongs to the Maf family. YhdE subfamily. The cofactor is a divalent metal cation.

Its subcellular location is the cytoplasm. It carries out the reaction dTTP + H2O = dTMP + diphosphate + H(+). The catalysed reaction is UTP + H2O = UMP + diphosphate + H(+). Functionally, nucleoside triphosphate pyrophosphatase that hydrolyzes dTTP and UTP. May have a dual role in cell division arrest and in preventing the incorporation of modified nucleotides into cellular nucleic acids. This is dTTP/UTP pyrophosphatase from Alkalilimnicola ehrlichii (strain ATCC BAA-1101 / DSM 17681 / MLHE-1).